We begin with the raw amino-acid sequence, 183 residues long: UPF0316 protein GTNG_0803 (183 aa).

The next 3 helical transmembrane spans lie at 5–25, 33–53, and 59–79; these read IVLV…RTIF, LAAF…SIVF, and YIVM…LEDI.

The protein belongs to the UPF0316 family.

The protein localises to the cell membrane. The polypeptide is UPF0316 protein GTNG_0803 (Geobacillus thermodenitrificans (strain NG80-2)).